Here is a 1147-residue protein sequence, read N- to C-terminus: Disease resistance protein RPP4 (1147 aa).

The TIR domain maps to R11–L175. The active site involves E86. The NB-ARC domain occupies E189–N446. LRR repeat units follow at residues M548 to K573, P584 to A606, Y608 to L629, G630 to I653, L655 to A676, M698 to P721, R722 to A743, E744 to L766, G767 to I790, L792 to A813, T814 to L836, E837 to C860, L926 to T950, L952 to L973, H974 to L996, S997 to S1017, T1018 to R1042, and S1044 to L1064.

Interacts with RSH1.

The catalysed reaction is NAD(+) + H2O = ADP-D-ribose + nicotinamide + H(+). TIR-NB-LRR receptor-like protein that confers resistance to the pathogen Hyaloperonospora arabidopsis isolates Emoy2 and Emwa1 (downy mildew disease). Plays a role in the regulation of temperature response during plant growth and survival. The protein is Disease resistance protein RPP4 of Arabidopsis thaliana (Mouse-ear cress).